The chain runs to 2193 residues: Non-reducing polyketide synthase esdpA (2193 aa).

One can recognise a Starter acyltransferase (SAT) domain in the interval 90–252; it reads NVLLAPLTVL…AKVQVNGRYH (163 aa). The region spanning 381 to 797 is the Ketosynthase family 3 (KS3) domain; it reads DECVAIVGAA…GNNTVIIVCE (417 aa). Catalysis depends on for beta-ketoacyl synthase activity residues cysteine 546, histidine 682, and histidine 720. In terms of domain architecture, Malonyl-CoA:ACP transacylase (MAT) spans 906-1158; that stretch reads VFSGQSGMTV…YFVDAVRRIK (253 aa). The active-site For acyl/malonyl transferase activity is serine 992. The segment at 1265–1392 is N-terminal hotdog fold; the sequence is PPMLSLENFS…GRVVLEDRRR (128 aa). In terms of domain architecture, PKS/mFAS DH spans 1265–1569; the sequence is PPMLSLENFS…FVKISSHILQ (305 aa). Residues 1419–1569 are C-terminal hotdog fold; that stretch reads VFSASGSIAY…FVKISSHILQ (151 aa). Aspartate 1479 acts as the Proton donor; for dehydratase activity in catalysis. A Carrier domain is found at 1723-1799; sequence RILSDSMIKL…ELHDLMQSHP (77 aa). Serine 1759 carries the O-(pantetheine 4'-phosphoryl)serine modification. The methyltransferase (CMeT) domain stretch occupies residues 1944 to 2177; the sequence is YHGSEHKLLR…GFTHVDWSND (234 aa).

It depends on pantetheine 4'-phosphate as a cofactor.

The protein operates within secondary metabolite biosynthesis; terpenoid biosynthesis. Functionally, non-reducing polyketide synthase; part of the cluster that mediates the biosynthesis of shearones, diterpenoid pyrones (DPs) which are structurally diverse meroterpenoids consisting of a diterpene linked by a pyrone, and which may exhibit a range of bioactivities. Whitin the pathway, esdpA takes part to the biosynthesis of the molecular scaffold via the production of the alpha-pyrone from one molecule of acetyl-CoA, two molecules of malonyl-CoA and one molecule of S-adenosyl-L-methionine (SAM). The molecular scaffold is commonly biosynthesized by a series of enzymes including the non-reducing polyketide synthase (NR-PKS) esdpA that generates an alpha-pyrone; the prenyltransferase esdpC that attaches a geranylgeranyl pyrophosphate (GGPP) produced by the GGPP synthase (GGPPS) esdpD onto the pyrone unit; the FAD-dependent monooxygenase esdpE that converts an olefin on the diterpene unit into an epoxide; and the terpene cyclase esdpB that catalyzes the cyclization reactions to give the molecular backbone shearone A. In the modification steps, esdpF oxidizes the hydroxy group to a ketone at C-3 and esdpG then attaches hydroxy groups at both C-11 and C-12. After that, esdpI hydroxylates at C-20 and esdpH hydroxylates at C-6'. The ether bridge is generated by nucleophilic attack of the hydroxy group at C-20 to the carbonyl carbon at C-3. EsdpH can also functions prior to esdpI. The different combinations of these modification enzymes lead to the production of diverse shearone derivatives, shearone I being the end product of the pathway. The alpha-ketoglutarate-dependent dioxygenase esdpJ seems not to be involved in this pathway. This chain is Non-reducing polyketide synthase esdpA, found in Penicillium shearii (Eupenicillium shearii).